The chain runs to 51 residues: Large ribosomal subunit protein eL40 (51 aa).

The protein belongs to the eukaryotic ribosomal protein eL40 family.

This chain is Large ribosomal subunit protein eL40, found in Thermofilum pendens (strain DSM 2475 / Hrk 5).